We begin with the raw amino-acid sequence, 183 residues long: Ribosome-recycling factor (183 aa).

This sequence belongs to the RRF family.

The protein localises to the cytoplasm. Functionally, responsible for the release of ribosomes from messenger RNA at the termination of protein biosynthesis. May increase the efficiency of translation by recycling ribosomes from one round of translation to another. The chain is Ribosome-recycling factor from Buchnera aphidicola subsp. Baizongia pistaciae (strain Bp).